Consider the following 187-residue polypeptide: Pyridoxal 5'-phosphate synthase subunit PdxT (187 aa).

47–49 contacts L-glutamine; the sequence is GES. C76 acts as the Nucleophile in catalysis. Residues R102 and 128-129 each bind L-glutamine; that span reads IR. Residues H165 and E167 each act as charge relay system in the active site.

This sequence belongs to the glutaminase PdxT/SNO family. In the presence of PdxS, forms a dodecamer of heterodimers. Only shows activity in the heterodimer.

The catalysed reaction is aldehydo-D-ribose 5-phosphate + D-glyceraldehyde 3-phosphate + L-glutamine = pyridoxal 5'-phosphate + L-glutamate + phosphate + 3 H2O + H(+). The enzyme catalyses L-glutamine + H2O = L-glutamate + NH4(+). It functions in the pathway cofactor biosynthesis; pyridoxal 5'-phosphate biosynthesis. Its function is as follows. Catalyzes the hydrolysis of glutamine to glutamate and ammonia as part of the biosynthesis of pyridoxal 5'-phosphate. The resulting ammonia molecule is channeled to the active site of PdxS. The chain is Pyridoxal 5'-phosphate synthase subunit PdxT from Methanococcus maripaludis (strain C7 / ATCC BAA-1331).